A 381-amino-acid chain; its full sequence is E3 ubiquitin-protein ligase RNF13 (381 aa).

The signal sequence occupies residues 1–34 (MLLSIGMLMLSATQVYTILTVQLFAFLNLLPVEA). Topologically, residues 35-182 (DILAYNFENA…VPEFSLPLEY (148 aa)) are lumenal. Positions 65-160 (KGFLINSKPE…GESSANSLKD (96 aa)) constitute a PA domain. An N-linked (GlcNAc...) asparagine glycan is attached at Asn-88. A helical transmembrane segment spans residues 183-203 (YLIPFLIIVGICLILIVIFMI). The Cytoplasmic portion of the chain corresponds to 204-381 (TKFVQDRHRA…ERDYNIANTV (178 aa)). Residues 240–282 (CAICLDEYEDGDKLRILPCSHAYHCKCVDPWLTKTKKTCPVCK) form an RING-type; atypical zinc finger. A disordered region spans residues 285-381 (VVPSQGDSDS…ERDYNIANTV (97 aa)). 2 stretches are compositionally biased toward acidic residues: residues 292-304 (SDSD…EENE) and 339-357 (SDYE…AENE).

As to quaternary structure, interacts with ERN1. Post-translationally, autoubiquitinated. Widely expressed (at protein level). In normal pancreas, expressed in islets, but not in ducts, nor in acini (at protein level).

The protein localises to the endoplasmic reticulum membrane. It is found in the late endosome membrane. The protein resides in the lysosome membrane. It localises to the nucleus inner membrane. The enzyme catalyses S-ubiquitinyl-[E2 ubiquitin-conjugating enzyme]-L-cysteine + [acceptor protein]-L-lysine = [E2 ubiquitin-conjugating enzyme]-L-cysteine + N(6)-ubiquitinyl-[acceptor protein]-L-lysine.. It participates in protein modification; protein ubiquitination. E3 ubiquitin-protein ligase that regulates cell proliferation. Involved in apoptosis regulation. Mediates ER stress-induced activation of JNK signaling pathway and apoptosis by promoting ERN1 activation and splicing of XBP1 mRNA. Also involved in protein trafficking and localization. This chain is E3 ubiquitin-protein ligase RNF13, found in Homo sapiens (Human).